The chain runs to 117 residues: Mediator of RNA polymerase II transcription subunit 11 (117 aa).

Position 2 is an N-acetylalanine (Ala2).

Belongs to the Mediator complex subunit 11 family. As to quaternary structure, component of the Mediator complex, which is composed of MED1, MED4, MED6, MED7, MED8, MED9, MED10, MED11, MED12, MED13, MED13L, MED14, MED15, MED16, MED17, MED18, MED19, MED20, MED21, MED22, MED23, MED24, MED25, MED26, MED27, MED29, MED30, MED31, CCNC, CDK8 and CDC2L6/CDK11. The MED12, MED13, CCNC and CDK8 subunits form a distinct module termed the CDK8 module. Mediator containing the CDK8 module is less active than Mediator lacking this module in supporting transcriptional activation. Individual preparations of the Mediator complex lacking one or more distinct subunits have been variously termed ARC, CRSP, DRIP, PC2, SMCC and TRAP. As to expression, expressed in cochlea.

The protein resides in the nucleus. Component of the Mediator complex, a coactivator involved in the regulated transcription of nearly all RNA polymerase II-dependent genes. Mediator functions as a bridge to convey information from gene-specific regulatory proteins to the basal RNA polymerase II transcription machinery. Mediator is recruited to promoters by direct interactions with regulatory proteins and serves as a scaffold for the assembly of a functional pre-initiation complex with RNA polymerase II and the general transcription factors. The polypeptide is Mediator of RNA polymerase II transcription subunit 11 (Med11) (Mus musculus (Mouse)).